The sequence spans 57 residues: Potassium channel toxin alpha-KTx 17.2 (57 aa).

A signal peptide spans 1-26 (MKTIIVLLLLTIVAAAVVESSPKARR). Intrachain disulfides connect Cys-30–Cys-46, Cys-36–Cys-51, and Cys-40–Cys-53.

It belongs to the short scorpion toxin superfamily. Potassium channel inhibitor family. Alpha-KTx 17 subfamily. In terms of tissue distribution, expressed by the venom gland.

It localises to the secreted. In terms of biological role, inhibits voltage-gated potassium channels. The protein is Potassium channel toxin alpha-KTx 17.2 of Lychas mucronatus (Chinese swimming scorpion).